Here is a 711-residue protein sequence, read N- to C-terminus: T-box transcription factor TBX2 (711 aa).

The segment at residues 109-287 is a DNA-binding region (T-box); the sequence is LEAKELWDQF…NNPFAKGFRD (179 aa). A disordered region spans residues 313 to 449; sequence PERDGAESDA…GEGKEPSLAP (137 aa). The segment covering 326–340 has biased composition (pro residues); the sequence is DPPPAREPPPSPSAA. 3 positions are modified to phosphoserine: serine 336, serine 342, and serine 360. Basic and acidic residues-rich tracts occupy residues 363-372, 390-409, and 421-444; these read EPERTGEERS, TEPE…KEPT, and SLEK…EGKE. The tract at residues 518–602 is repression domain 1 (RD1); the sequence is GSGSSGGAGP…ATSAAAAAAA (85 aa). Phosphoserine occurs at positions 623, 652, 656, and 675. Residues 640 to 687 form a disordered region; the sequence is TGLAAEGSKGGNSREPSPLPELALRKVGGPSRGALSPSGSAKEAASEL.

Binds DNA as a monomer. Interacts with CHD4, HDAC1 and HDAC2, perhaps as components of a NuRD-like complex. Interacts with CBX3, HMGB2 and PBX1. Interacts with PML. In terms of processing, phosphorylated. May be phosphorylated by p38 MAPK in response to UV irradiation stress. In terms of tissue distribution, in adults, highest levels in lung. Also found in heart, kidney, and ovary.

It is found in the nucleus. Transcription factor which acts as a transcriptional repressor. May also function as a transcriptional activator. Binds to the palindromic T site 5'-TTCACACCTAGGTGTGAA-3' DNA sequence, or a half-site, which are present in the regulatory region of several genes. Required for cardiac atrioventricular canal formation. May cooperate with NKX2.5 to negatively modulate expression of NPPA/ANF in the atrioventricular canal. May play a role as a positive regulator of TGFB2 expression, perhaps acting in concert with GATA4 in the developing outflow tract myocardium. Plays a role in limb pattern formation. Acts as a transcriptional repressor of ADAM10 gene expression, perhaps in concert with histone deacetylase HDAC1 as cofactor. Involved in branching morphogenesis in both developing lungs and adult mammary glands, via negative modulation of target genes; acting redundantly with TBX3. Required, together with TBX3, to maintain cell proliferation in the embryonic lung mesenchyme; perhaps acting downstream of SHH, BMP and TGFbeta signaling. Involved in modulating early inner ear development, acting independently of, and also redundantly with TBX3, in different subregions of the developing ear. Acts as a negative regulator of PML function in cellular senescence. Acts as a negative regulator of expression of CDKN1A/p21, IL33 and CCN4; repression of CDKN1A is enhanced in response to UV-induced stress, perhaps as a result of phosphorylation by p38 MAPK. Negatively modulates expression of CDKN2A/p19ARF and CDH1/E-cadherin. Plays a role in induction of the epithelial-mesenchymal transition (EMT). Plays a role in melanocyte proliferation, perhaps via regulation of cyclin CCND1. Involved in melanogenesis, acting via negative modulation of expression of DHICA oxidase/TYRP1 and P protein/OCA2. Involved in regulating retinal pigment epithelium (RPE) cell proliferation, perhaps via negatively modulating transcription of the transcription factor CEBPD. This chain is T-box transcription factor TBX2 (Tbx2), found in Mus musculus (Mouse).